A 275-amino-acid chain; its full sequence is NADPH-dependent 7-cyano-7-deazaguanine reductase (275 aa).

Substrate is bound at residue 81–83 (VES). Residue 83–84 (SK) coordinates NADPH. Cys182 (thioimide intermediate) is an active-site residue. Asp189 acts as the Proton donor in catalysis. 221–222 (HE) contacts substrate. 250 to 251 (RG) is a binding site for NADPH.

Belongs to the GTP cyclohydrolase I family. QueF type 2 subfamily. As to quaternary structure, homodimer.

It is found in the cytoplasm. The enzyme catalyses 7-aminomethyl-7-carbaguanine + 2 NADP(+) = 7-cyano-7-deazaguanine + 2 NADPH + 3 H(+). It functions in the pathway tRNA modification; tRNA-queuosine biosynthesis. Its function is as follows. Catalyzes the NADPH-dependent reduction of 7-cyano-7-deazaguanine (preQ0) to 7-aminomethyl-7-deazaguanine (preQ1). The sequence is that of NADPH-dependent 7-cyano-7-deazaguanine reductase from Polaromonas sp. (strain JS666 / ATCC BAA-500).